The sequence spans 346 residues: Partitioning defective 6 homolog alpha (346 aa).

An interaction with PRKCI and PRKCZ region spans residues 1–116; the sequence is MARPQRTPAR…SNSLQRRKKG (116 aa). The PB1 domain maps to 15–95; that stretch reads IVEVKSKFDA…PPLRLLVQKR (81 aa). Residues 126 to 253 form an interaction with PARD3 and CDC42 region; the sequence is RTRPPLLISL…VTVKPANQRN (128 aa). Residues 133–150 enclose the Pseudo-CRIB domain; it reads ISLPQDFRQVSSVIDVDL. Residues 157-250 form the PDZ domain; the sequence is RVRLHKHGSD…NLIVTVKPAN (94 aa). Residues 257 to 346 are disordered; sequence RGASGRLTGP…IRGDGSGFSL (90 aa). 2 positions are modified to phosphoserine: S278 and S345.

The protein belongs to the PAR6 family. In terms of assembly, interacts with MAP2K5. Interacts with PARD3. Interacts with GTP-bound forms of CDC42, RHOQ/TC10 and RAC1. Interacts with the N-terminal part of PRKCI and PRKCZ. Part of a complex with PARD3, CDC42 or RAC1 and PRKCI or PRKCZ. Part of a complex with LLGL1 and PRKCI. Interacts with human T-cell leukemia virus type I TAX protein. Interacts with PALS1 and CRB3. Interacts with TGFBR1; involved in TGF-beta induced epithelial to mesenchymal transition. Interacts with ECT2 ('Thr-359' phosphorylated form) and PRKCI. Interacts with DCTN1 and PCM1. Post-translationally, phosphorylated by the TGF-beta receptor. Ubiquitinated by the SCF(FBXO31) complex, leading to its proteasomal degradation. Expressed in pancreas, skeletal muscle, brain and heart. Weakly expressed in kidney and placenta.

Its subcellular location is the cytoplasm. The protein localises to the cell membrane. It is found in the cell projection. It localises to the ruffle. The protein resides in the cell junction. Its subcellular location is the tight junction. The protein localises to the cytoskeleton. It is found in the microtubule organizing center. It localises to the centrosome. The protein resides in the centriolar satellite. Adapter protein involved in asymmetrical cell division and cell polarization processes. Probably involved in the formation of epithelial tight junctions. Association with PARD3 may prevent the interaction of PARD3 with F11R/JAM1, thereby preventing tight junction assembly. The PARD6-PARD3 complex links GTP-bound Rho small GTPases to atypical protein kinase C proteins. Regulates centrosome organization and function. Essential for the centrosomal recruitment of key proteins that control centrosomal microtubule organization. In Homo sapiens (Human), this protein is Partitioning defective 6 homolog alpha (PARD6A).